The chain runs to 278 residues: Sulfur carrier protein FdhD (278 aa).

Residue Cys-121 is the Cysteine persulfide intermediate of the active site. Residue 260 to 265 (FCKPGR) participates in Mo-bis(molybdopterin guanine dinucleotide) binding.

This sequence belongs to the FdhD family.

The protein resides in the cytoplasm. Functionally, required for formate dehydrogenase (FDH) activity. Acts as a sulfur carrier protein that transfers sulfur from IscS to the molybdenum cofactor prior to its insertion into FDH. This Klebsiella pneumoniae subsp. pneumoniae (strain ATCC 700721 / MGH 78578) protein is Sulfur carrier protein FdhD.